The primary structure comprises 143 residues: Large ribosomal subunit protein uL15 (143 aa).

Composition is skewed to basic residues over residues 1–14 and 23–38; these read MIRK…KRGS and KKHR…GNAG. The disordered stretch occupies residues 1 to 38; that stretch reads MIRKSKKITKKRGSRTCGYGEAKKHRGAGHRGGRGNAG.

This sequence belongs to the universal ribosomal protein uL15 family. As to quaternary structure, part of the 50S ribosomal subunit.

Functionally, binds to the 23S rRNA. In Methanococcus maripaludis (strain DSM 14266 / JCM 13030 / NBRC 101832 / S2 / LL), this protein is Large ribosomal subunit protein uL15.